We begin with the raw amino-acid sequence, 341 residues long: Phosphoribosylaminoimidazole-succinocarboxamide synthase, chloroplastic (341 aa).

This sequence belongs to the SAICAR synthetase family.

Its subcellular location is the plastid. The protein resides in the chloroplast. The enzyme catalyses 5-amino-1-(5-phospho-D-ribosyl)imidazole-4-carboxylate + L-aspartate + ATP = (2S)-2-[5-amino-1-(5-phospho-beta-D-ribosyl)imidazole-4-carboxamido]succinate + ADP + phosphate + 2 H(+). It functions in the pathway purine metabolism; IMP biosynthesis via de novo pathway; 5-amino-1-(5-phospho-D-ribosyl)imidazole-4-carboxamide from 5-amino-1-(5-phospho-D-ribosyl)imidazole-4-carboxylate: step 1/2. This Vigna aconitifolia (Moth bean) protein is Phosphoribosylaminoimidazole-succinocarboxamide synthase, chloroplastic (PUR7).